A 139-amino-acid polypeptide reads, in one-letter code: Small ribosomal subunit protein uS12 (139 aa).

The segment at 12–55 (RVDKVKKSDSPALNKGYNSFKKSQTDVSSPQKRGVCTRVGTMTP) is disordered. Over residues 27 to 42 (GYNSFKKSQTDVSSPQ) the composition is skewed to polar residues. D102 is subject to 3-methylthioaspartic acid. Positions 119–139 (GVQNRMQGRSKYGTKKPKDKK) are disordered. Over residues 130-139 (YGTKKPKDKK) the composition is skewed to basic residues.

It belongs to the universal ribosomal protein uS12 family. As to quaternary structure, part of the 30S ribosomal subunit. Contacts proteins S8 and S17. May interact with IF1 in the 30S initiation complex.

In terms of biological role, with S4 and S5 plays an important role in translational accuracy. Interacts with and stabilizes bases of the 16S rRNA that are involved in tRNA selection in the A site and with the mRNA backbone. Located at the interface of the 30S and 50S subunits, it traverses the body of the 30S subunit contacting proteins on the other side and probably holding the rRNA structure together. The combined cluster of proteins S8, S12 and S17 appears to hold together the shoulder and platform of the 30S subunit. This is Small ribosomal subunit protein uS12 from Shouchella clausii (strain KSM-K16) (Alkalihalobacillus clausii).